Consider the following 339-residue polypeptide: DNA-directed RNA polymerase subunit alpha (339 aa).

An alpha N-terminal domain (alpha-NTD) region spans residues 1 to 235 (MTIQKNWQEL…DQLNVFVNFE (235 aa)). An alpha C-terminal domain (alpha-CTD) region spans residues 251–339 (FNPAFLKKVD…ELAKRFEDHY (89 aa)).

This sequence belongs to the RNA polymerase alpha chain family. As to quaternary structure, homodimer. The RNAP catalytic core consists of 2 alpha, 1 beta, 1 beta' and 1 omega subunit. When a sigma factor is associated with the core the holoenzyme is formed, which can initiate transcription.

It catalyses the reaction RNA(n) + a ribonucleoside 5'-triphosphate = RNA(n+1) + diphosphate. Its function is as follows. DNA-dependent RNA polymerase catalyzes the transcription of DNA into RNA using the four ribonucleoside triphosphates as substrates. The polypeptide is DNA-directed RNA polymerase subunit alpha (Nitrobacter winogradskyi (strain ATCC 25391 / DSM 10237 / CIP 104748 / NCIMB 11846 / Nb-255)).